A 206-amino-acid chain; its full sequence is Testis-expressed protein 38 (206 aa).

The helical transmembrane segment at valine 15–phenylalanine 35 threads the bilayer.

It is found in the membrane. This Homo sapiens (Human) protein is Testis-expressed protein 38 (TEX38).